The primary structure comprises 334 residues: Serine/Arginine-related protein 53 (334 aa).

Over residues 1-13 the composition is skewed to basic and acidic residues; that stretch reads MGRRSSDTEEESR. Disordered regions lie at residues 1–179, 201–220, and 243–290; these read MGRR…HLPP, LKAK…EDQA, and QTFR…SIPT. Basic residues-rich tracts occupy residues 14-24 and 35-50; these read SKRKKKHRRRS and YSRK…KSRS. A compositionally biased stretch (basic and acidic residues) spans 51 to 62; the sequence is WSRDLQPRSHSY. The span at 78 to 118 shows a compositional bias: basic residues; sequence SRRKRSRSRSRGRGKSYRVQRSRSKSRTRRSRSRPRLRSHS. Basic and acidic residues-rich tracts occupy residues 132–166, 201–218, and 247–259; these read RSRD…KRGE, LKAK…KEED, and SSKE…EPSE. The stretch at 180 to 236 forms a coiled coil; that stretch reads AEQAKARLQLVLEAAAKADEALKAKERNEEEAKRRKEEDQATLVEQVKRVKEIEAIE.

As to quaternary structure, interacts (via Arg/Ser-rich domain) with LUC7L3, RBM39 and RSF1. In terms of processing, phosphorylated. In terms of tissue distribution, widely expressed. Expressed in brain, spinal cord, cerebellum.

It is found in the nucleus. The protein localises to the nucleus speckle. It localises to the cytoplasm. Has a role in alternative splicing and transcription regulation. Involved in both constitutive and alternative pre-mRNA splicing. May have a role in the recognition of the 3' splice site during the second step of splicing. The sequence is that of Serine/Arginine-related protein 53 (RSRC1) from Homo sapiens (Human).